A 553-amino-acid polypeptide reads, in one-letter code: Hydroxylamine reductase (553 aa).

Residues Cys-3, Cys-6, Cys-15, and Cys-21 each contribute to the [4Fe-4S] cluster site. Positions 244, 268, 312, 406, 434, 459, 494, and 496 each coordinate hybrid [4Fe-2O-2S] cluster. A Cysteine persulfide modification is found at Cys-406.

The protein belongs to the HCP family. As to quaternary structure, monomer. The cofactor is [4Fe-4S] cluster. Hybrid [4Fe-2O-2S] cluster is required as a cofactor.

It is found in the cytoplasm. It catalyses the reaction A + NH4(+) + H2O = hydroxylamine + AH2 + H(+). Catalyzes the reduction of hydroxylamine to form NH(3) and H(2)O. This is Hydroxylamine reductase from Nitratidesulfovibrio vulgaris (strain ATCC 29579 / DSM 644 / CCUG 34227 / NCIMB 8303 / VKM B-1760 / Hildenborough) (Desulfovibrio vulgaris).